The primary structure comprises 436 residues: bZIP transcription factor RISBZ1 (436 aa).

The interval 1 to 27 is required for transactivation activity; it reads MEHVFAVDEIPDPLWAPPPPVQPAAAA. A disordered region spans residues 182 to 258; that stretch reads LSPGPNGGSG…SARRSRSRKA (77 aa). Residues 215–225 are compositionally biased toward acidic residues; it reads PSEDDDMEGDA. A bZIP domain is found at 236–299; it reads EDKVKKRKES…SAAAIDNRVL (64 aa). Residues 238 to 257 form a basic motif region; it reads KVKKRKESNRESARRSRSRK. Residues 264 to 278 are leucine-zipper; it reads LEEQVSLLRVENSSL.

As to quaternary structure, homodimer. Forms heterodimers with RISBZ2/BZP33 and RISBZ3/BZP20. Interacts with DOF3/RPBF. Specifically expressed in seeds. Expressed in aleurone and subaleurone layers of maturing seeds, but not in the embryo tissues.

The protein localises to the nucleus. Transcriptional activator that binds to the DNA specific sequence 5'-TGAGTCA-3' found in seed storage protein gene promoters. Involved in the endosperm-specific regulation of storage protein genes. Can activate the expression of genes encoding for the seed storage proteins glutelin, prolamin, globulin and the allergen RAG1. Functions synergistically with DOF3/RPBF to positively regulate quantitatively many seed storage protein genes. Functions synergistically with DOF3/RPBF to positively regulate some metabolic enzymes, such as alanine aminotransferase and pyruvate phosphate dikinase, that are expressed in developing seeds. Functions synergistically with DOF3/RPBF to positively regulate genes that are key players in the development of aleurone layers. Functions synergistically with DOF3/RPBF to positively regulate the glutelin GLUD-1 gene in endosperm of developing seeds. Can activate the expression of the bifunctional lysine-degrading enzyme, lysine ketoglutarate reductase/saccharopine dehydrogenase (LKR/SDH), one of the key regulators determining free lysine content in plants. Functions as a key regulator of starch synthesis in seeds, by direct binding to the promoters of starch-synthesizing genes, such as AGPL3, WAXXY and SBE1. The sequence is that of bZIP transcription factor RISBZ1 from Oryza sativa subsp. japonica (Rice).